A 496-amino-acid chain; its full sequence is Cobyric acid synthase (496 aa).

In terms of domain architecture, GATase cobBQ-type spans 250 to 437 (TLKVIAPALP…LHGLFESPQA (188 aa)). Cys-331 acts as the Nucleophile in catalysis. His-429 is an active-site residue.

This sequence belongs to the CobB/CobQ family. CobQ subfamily.

It participates in cofactor biosynthesis; adenosylcobalamin biosynthesis. In terms of biological role, catalyzes amidations at positions B, D, E, and G on adenosylcobyrinic A,C-diamide. NH(2) groups are provided by glutamine, and one molecule of ATP is hydrogenolyzed for each amidation. This chain is Cobyric acid synthase, found in Hahella chejuensis (strain KCTC 2396).